We begin with the raw amino-acid sequence, 529 residues long: Cytochrome P450 monooxygenase okaD (529 aa).

The chain crosses the membrane as a helical span at residues 13–35 (LPAQHLLASLALVGALLSVGYLL). Cysteine 435 contributes to the heme binding site.

It belongs to the cytochrome P450 family. It depends on heme as a cofactor.

The protein resides in the membrane. The enzyme catalyses okaramine C + 2 reduced [NADPH--hemoprotein reductase] + 2 O2 = okaramine A + 2 oxidized [NADPH--hemoprotein reductase] + 4 H2O + 2 H(+). It functions in the pathway alkaloid biosynthesis. Functionally, cytochrome P450 monooxygenase; part of the gene cluster that mediates the biosynthesis of okaramine B, a prenylated indole alkaloid that possesses an unusual octacyclic ring system, including a four-membered azetidine ring and an eight-membered azocine ring, and that exhibits insecticidal activity against silkworm larvae. Within the pathway, okaD likely catalyzes a key step in forming the eight-membered ring of okaramine A using as substrate okaramine C. The biosynthesis begins with the NRPS okaA that condenses two tryptophan molecules into cyclo(L-Trp-L-Trp). Prenylation by the prenyltransferase okaC then leads to the formation of cyclo(N8-(alpha,alpha-dimethylallyl)-L-Trp-6a-(alpha,alpha-dime-thylallyl)-L-Trp). This is followed by indole 2,3-epoxidation by the FAD-dependent monooxygenase okaB to facilitate the formation of the hexahydropyrrolo[2,3-b]indole (HPI) moiety of okaramine C. The cytochrome P450 monooxygenase okaD then likely catalyzes formation of the eight-membered ring of okaramine A. The dioxygenase okaE further forms the unusual 2-dimethyl-3-methyl-azetidine ring to yield 12-deshydroxyl okaramine E, as well as the hydroxylation of 12-deshydroxyl okaramine E to produce okaramine E. The cytochrome P450 monoxygenase okaG converts 12-deshydroxyl okaramine E into 3-desmethyl okaramine B which is further methylated by the methyltransferase okaF into okaramine B. In a shunt pathway, okaG and okaF together are also able to convert okaramine E into okaramine D. Okaramine H is produced by nonenzymatic conversion from okaramine A. In Penicillium ochrochloron, this protein is Cytochrome P450 monooxygenase okaD.